Reading from the N-terminus, the 125-residue chain is Ribonuclease VapC19 (125 aa).

Residues 3–122 form the PINc domain; sequence LIDTTIAVDH…RHFPMFPDLQ (120 aa). 2 residues coordinate Mg(2+): aspartate 5 and aspartate 93.

It belongs to the PINc/VapC protein family. Requires Mg(2+) as cofactor.

Functionally, toxic component of a type II toxin-antitoxin (TA) system. An RNase. Its toxic effect is neutralized by coexpression with cognate antitoxin VapB19. The polypeptide is Ribonuclease VapC19 (Mycobacterium tuberculosis (strain CDC 1551 / Oshkosh)).